A 4218-amino-acid chain; its full sequence is Protein Obscurin (4218 aa).

The region spanning 3–71 (AVADIVFVSR…PIDILEFNPT (69 aa)) is the SH3 domain. One can recognise a DH domain in the interval 86–264 (RKLTILRELV…LSVPSRAYDN (179 aa)). A coiled-coil region spans residues 439–466 (SKETKERLQHEQQELLKLEQEAIELYKK). 4 disordered regions span residues 465-592 (KKQQ…SHSK), 684-703 (SLRDGDTAPAGGSPGRQQGY), 728-750 (SGANQHLQQSGPPPPPIPPNFTR), and 923-1010 (RYET…EDRP). 2 stretches are compositionally biased toward low complexity: residues 466-490 (KQQSSKSVSSKTESVEITSSQVKSS) and 505-517 (AQVKEVTPVKVVS). Positions 578–592 (KEVRKEVPPSASHSK) are enriched in basic and acidic residues. The span at 923–935 (RYETKTRDYDRGT) shows a compositional bias: basic and acidic residues. Positions 936-948 (SYDSTVERSQYGI) are enriched in polar residues. Composition is skewed to basic and acidic residues over residues 950–962 (SRRDRSSVDKVEA) and 972–986 (TESRAASRAESRAES). Residues 987–996 (RASYSVAESR) are compositionally biased toward low complexity. 15 consecutive Ig-like C2-type domains span residues 1017-1103 (PVVV…TTVS), 1152-1298 (PRVK…AELS), 1313-1400 (PTLV…SSIN), 1504-1594 (PVIV…TQLL), 1599-1689 (PEFT…CVVT), 1694-1785 (PKVK…CKVA), 1815-1906 (PEIV…LSLS), 2018-2107 (PEIS…FNLA), 2113-2214 (PTFI…FKLA), 2220-2305 (PSFV…EKVA), 2318-2409 (PKFL…VEIV), 2415-2505 (PVFV…AKLY), 2519-2609 (PQFV…ANVR), 2614-2698 (PPVF…KDIT), and 2716-2792 (PPVF…SCRI). A disulfide bridge links C1199 with C1282. C2739 and C2790 are oxidised to a cystine. Residues 2832 to 2933 (APPPLSEGPI…TYRQKLVPDP (102 aa)) enclose the Fibronectin type-III 1 domain. One can recognise a Protein kinase 1 domain in the interval 3186-3440 (YDIGDELGRG…VKTALKHPWF (255 aa)). ATP is bound by residues G3198, K3215, E3260, A3262, E3266, K3310, and D3326. Residues 3654–3738 (PFFREKPQTI…ARNKVGQTVA (85 aa)) enclose the Ig-like C2-type 16 domain. The Fibronectin type-III 2 domain maps to 3750–3843 (APDSPEISAN…IPVSASTVGG (94 aa)). A Protein kinase 2 domain is found at 3897–4151 (YSFISEIARG…TEDCLEHRWL (255 aa)).

Belongs to the protein kinase superfamily. CAMK Ser/Thr protein kinase family. In terms of assembly, interacts with myosin. May interact (via protein kinase domain 1) with ball. May interact (via protein kinase domain 1 or 2) with mask. May interact (via protein kinase domain 2) with Tm1/tropomyosin-1. As to expression, expressed in the thoracic muscles including the indirect flight muscles (IFM) (at protein level).

The protein resides in the cytoplasm. It is found in the myofibril. The protein localises to the sarcomere. Its subcellular location is the m line. Structural component of the muscle M line which is involved in assembly and organization of sarcomere. Required for the development and organization of indirect flight muscle sarcomeres by regulating the formation of M line and H zone and the correct assembly of thick and thin filaments in the sarcomere. Lacks serine/threonine-protein kinase activity. The polypeptide is Protein Obscurin (Drosophila melanogaster (Fruit fly)).